We begin with the raw amino-acid sequence, 295 residues long: Virginiamycin B lyase (295 aa).

His-227 is a substrate binding site. A Mg(2+)-binding site is contributed by Glu-267. The active-site Proton acceptor is the His-269. Mg(2+) is bound at residue Glu-284.

This sequence belongs to the Vgb family. In terms of assembly, monomer. The cofactor is Mg(2+).

Its function is as follows. Inactivates the type B streptogramin antibiotics by linearizing the lactone ring at the ester linkage, generating a free phenylglycine carboxylate and converting the threonyl moiety into 2-amino-butenoic acid. The chain is Virginiamycin B lyase from Bacillus licheniformis (strain ATCC 14580 / DSM 13 / JCM 2505 / CCUG 7422 / NBRC 12200 / NCIMB 9375 / NCTC 10341 / NRRL NRS-1264 / Gibson 46).